The sequence spans 100 residues: Small ribosomal subunit protein bS18c (100 aa).

Residues 1–19 are compositionally biased toward basic residues; that stretch reads MDKSKRPFRKSKRSFRRRL. The disordered stretch occupies residues 1–23; sequence MDKSKRPFRKSKRSFRRRLPPIG.

It belongs to the bacterial ribosomal protein bS18 family. As to quaternary structure, part of the 30S ribosomal subunit.

It localises to the plastid. Its subcellular location is the chloroplast. This Calycanthus floridus var. glaucus (Eastern sweetshrub) protein is Small ribosomal subunit protein bS18c.